We begin with the raw amino-acid sequence, 254 residues long: Triosephosphate isomerase (254 aa).

9–11 provides a ligand contact to substrate; it reads NWK. The Electrophile role is filled by His-98. Glu-170 acts as the Proton acceptor in catalysis. Substrate is bound by residues Gly-176, Ser-215, and 236–237; that span reads GG.

This sequence belongs to the triosephosphate isomerase family. Homodimer.

It is found in the cytoplasm. It carries out the reaction D-glyceraldehyde 3-phosphate = dihydroxyacetone phosphate. The protein operates within carbohydrate biosynthesis; gluconeogenesis. It functions in the pathway carbohydrate degradation; glycolysis; D-glyceraldehyde 3-phosphate from glycerone phosphate: step 1/1. Functionally, involved in the gluconeogenesis. Catalyzes stereospecifically the conversion of dihydroxyacetone phosphate (DHAP) to D-glyceraldehyde-3-phosphate (G3P). This Buchnera aphidicola subsp. Cinara cedri (strain Cc) protein is Triosephosphate isomerase.